Reading from the N-terminus, the 296-residue chain is Fructose-bisphosphate aldolase class 1 (296 aa).

Residue Glu-175 is the Proton acceptor of the active site. The Schiff-base intermediate with dihydroxyacetone-P role is filled by Lys-212.

Belongs to the class I fructose-bisphosphate aldolase family.

It catalyses the reaction beta-D-fructose 1,6-bisphosphate = D-glyceraldehyde 3-phosphate + dihydroxyacetone phosphate. It participates in carbohydrate degradation; glycolysis; D-glyceraldehyde 3-phosphate and glycerone phosphate from D-glucose: step 4/4. The polypeptide is Fructose-bisphosphate aldolase class 1 (fda) (Staphylococcus epidermidis (strain ATCC 12228 / FDA PCI 1200)).